Reading from the N-terminus, the 359-residue chain is Fructose-bisphosphate aldolase (359 aa).

Serine 50 serves as a coordination point for D-glyceraldehyde 3-phosphate. Aspartate 83 acts as the Proton donor in catalysis. Residues histidine 84, aspartate 105, glutamate 142, and histidine 198 each contribute to the Zn(2+) site. Residue glycine 199 coordinates dihydroxyacetone phosphate. Residue histidine 232 participates in Zn(2+) binding. Residues 233-235 (GSS) and 275-278 (NIDT) contribute to the dihydroxyacetone phosphate site.

It belongs to the class II fructose-bisphosphate aldolase family. Homodimer. Zn(2+) is required as a cofactor.

The catalysed reaction is beta-D-fructose 1,6-bisphosphate = D-glyceraldehyde 3-phosphate + dihydroxyacetone phosphate. The protein operates within carbohydrate biosynthesis; Calvin cycle. It participates in carbohydrate degradation; glycolysis; D-glyceraldehyde 3-phosphate and glycerone phosphate from D-glucose: step 4/4. Catalyzes the aldol condensation of dihydroxyacetone phosphate (DHAP or glycerone-phosphate) with glyceraldehyde 3-phosphate (G3P) to form fructose 1,6-bisphosphate (FBP) in gluconeogenesis and the reverse reaction in glycolysis. This Rhizobium meliloti (strain 1021) (Ensifer meliloti) protein is Fructose-bisphosphate aldolase (cbbA).